A 198-amino-acid chain; its full sequence is Nucleoid occlusion factor SlmA (198 aa).

An HTH tetR-type domain is found at Pro11 to Ile71. Positions Thr34–Phe53 form a DNA-binding region, H-T-H motif.

It belongs to the nucleoid occlusion factor SlmA family. As to quaternary structure, homodimer. Interacts with FtsZ.

It localises to the cytoplasm. The protein localises to the nucleoid. Required for nucleoid occlusion (NO) phenomenon, which prevents Z-ring formation and cell division over the nucleoid. Acts as a DNA-associated cell division inhibitor that binds simultaneously chromosomal DNA and FtsZ, and disrupts the assembly of FtsZ polymers. SlmA-DNA-binding sequences (SBS) are dispersed on non-Ter regions of the chromosome, preventing FtsZ polymerization at these regions. This chain is Nucleoid occlusion factor SlmA, found in Colwellia psychrerythraea (strain 34H / ATCC BAA-681) (Vibrio psychroerythus).